The chain runs to 694 residues: Threonine--tRNA ligase (694 aa).

One can recognise a TGS domain in the interval 8-74 (NFVNTSVTTH…EETATFTAVP (67 aa)). The interval 273–579 (DHRRLGTELD…LLEHYAGAFP (307 aa)) is catalytic. Cysteine 378, histidine 429, and histidine 556 together coordinate Zn(2+).

The protein belongs to the class-II aminoacyl-tRNA synthetase family. Homodimer. It depends on Zn(2+) as a cofactor.

The protein localises to the cytoplasm. The catalysed reaction is tRNA(Thr) + L-threonine + ATP = L-threonyl-tRNA(Thr) + AMP + diphosphate + H(+). Catalyzes the attachment of threonine to tRNA(Thr) in a two-step reaction: L-threonine is first activated by ATP to form Thr-AMP and then transferred to the acceptor end of tRNA(Thr). Also edits incorrectly charged L-seryl-tRNA(Thr). This chain is Threonine--tRNA ligase, found in Corynebacterium efficiens (strain DSM 44549 / YS-314 / AJ 12310 / JCM 11189 / NBRC 100395).